The following is a 563-amino-acid chain: Arginine--tRNA ligase (563 aa).

The short motif at P121–H131 is the 'HIGH' region element.

It belongs to the class-I aminoacyl-tRNA synthetase family. Monomer.

It localises to the cytoplasm. The enzyme catalyses tRNA(Arg) + L-arginine + ATP = L-arginyl-tRNA(Arg) + AMP + diphosphate. The sequence is that of Arginine--tRNA ligase from Streptococcus pyogenes serotype M12 (strain MGAS2096).